The chain runs to 274 residues: Large ribosomal subunit protein uL2 (274 aa).

Residues 221–256 are disordered; sequence RGTAMNPVDHPHGGGEGRNFGKHPVTPWGVPTKGYK.

Belongs to the universal ribosomal protein uL2 family. In terms of assembly, part of the 50S ribosomal subunit. Forms a bridge to the 30S subunit in the 70S ribosome.

One of the primary rRNA binding proteins. Required for association of the 30S and 50S subunits to form the 70S ribosome, for tRNA binding and peptide bond formation. It has been suggested to have peptidyltransferase activity; this is somewhat controversial. Makes several contacts with the 16S rRNA in the 70S ribosome. The chain is Large ribosomal subunit protein uL2 from Hahella chejuensis (strain KCTC 2396).